We begin with the raw amino-acid sequence, 66 residues long: Large ribosomal subunit protein bL35 (66 aa).

Residues 1 to 26 are compositionally biased toward basic residues; it reads MPKMKTHRGAAKRFKKTGTGKLKRGH. The disordered stretch occupies residues 1 to 48; it reads MPKMKTHRGAAKRFKKTGTGKLKRGHAYTSHLFANKTQKQKRKLRKAT.

It belongs to the bacterial ribosomal protein bL35 family.

The chain is Large ribosomal subunit protein bL35 from Geobacillus sp. (strain WCH70).